The following is a 31-amino-acid chain: Cytochrome b6-f complex subunit 8 (31 aa).

A helical membrane pass occupies residues 5-25 (IVSMAWAALMVVFTFSLSLVI).

This sequence belongs to the PetN family. As to quaternary structure, the 4 large subunits of the cytochrome b6-f complex are cytochrome b6, subunit IV (17 kDa polypeptide, PetD), cytochrome f and the Rieske protein, while the 4 small subunits are PetG, PetL, PetM and PetN. The complex functions as a dimer.

The protein resides in the plastid membrane. Functionally, component of the cytochrome b6-f complex, which mediates electron transfer between photosystem II (PSII) and photosystem I (PSI), cyclic electron flow around PSI, and state transitions. This is Cytochrome b6-f complex subunit 8 from Cuscuta gronovii (Common dodder).